A 106-amino-acid polypeptide reads, in one-letter code: Large ribosomal subunit protein uL23 (106 aa).

The protein belongs to the universal ribosomal protein uL23 family. As to quaternary structure, part of the 50S ribosomal subunit. Contacts protein L29, and trigger factor when it is bound to the ribosome.

Functionally, one of the early assembly proteins it binds 23S rRNA. One of the proteins that surrounds the polypeptide exit tunnel on the outside of the ribosome. Forms the main docking site for trigger factor binding to the ribosome. This is Large ribosomal subunit protein uL23 from Acinetobacter baumannii (strain AB307-0294).